The sequence spans 688 residues: Translation initiation factor IF-2 (688 aa).

Basic and acidic residues predominate over residues 50 to 62 (LLSGKEKSEKTKE). Residues 50-95 (LLSGKEKSEKTKEEDDEIETTAKNPIKESINNKKSNKRDDKNEKVN) are disordered. The segment covering 72 to 82 (KNPIKESINNK) has biased composition (low complexity). The span at 86-95 (KRDDKNEKVN) shows a compositional bias: basic and acidic residues. Residues 187-354 (KRSPIITVMG…MILLSSEILE (168 aa)) enclose the tr-type G domain. The G1 stretch occupies residues 196–203 (GHVDHGKT). GTP is bound at residue 196–203 (GHVDHGKT). Positions 221 to 225 (GITQH) are G2. A G3 region spans residues 242–245 (DTPG). Residues 242 to 246 (DTPGH) and 296 to 299 (NKID) contribute to the GTP site. Residues 296-299 (NKID) are G4. A G5 region spans residues 332 to 334 (SAH).

This sequence belongs to the TRAFAC class translation factor GTPase superfamily. Classic translation factor GTPase family. IF-2 subfamily.

The protein resides in the cytoplasm. Its function is as follows. One of the essential components for the initiation of protein synthesis. Protects formylmethionyl-tRNA from spontaneous hydrolysis and promotes its binding to the 30S ribosomal subunits. Also involved in the hydrolysis of GTP during the formation of the 70S ribosomal complex. The protein is Translation initiation factor IF-2 of Clostridium botulinum (strain Langeland / NCTC 10281 / Type F).